Here is a 336-residue protein sequence, read N- to C-terminus: UPF0324 membrane protein SP_0034 (336 aa).

The next 8 helical transmembrane spans lie at Leu65 to Ala84, Pro91 to Leu113, Ala118 to Ile140, Val153 to Ser175, Ser211 to Trp233, Val249 to Gly271, Phe286 to Val305, and Ile312 to Gly334.

It belongs to the UPF0324 family.

The protein resides in the cell membrane. This Streptococcus pneumoniae serotype 4 (strain ATCC BAA-334 / TIGR4) protein is UPF0324 membrane protein SP_0034.